The sequence spans 122 residues: Large ribosomal subunit protein eL8 (122 aa).

Belongs to the eukaryotic ribosomal protein eL8 family. As to quaternary structure, part of the 50S ribosomal subunit. Probably part of the RNase P complex.

Its subcellular location is the cytoplasm. Multifunctional RNA-binding protein that recognizes the K-turn motif in ribosomal RNA, the RNA component of RNase P, box H/ACA, box C/D and box C'/D' sRNAs. The sequence is that of Large ribosomal subunit protein eL8 from Methanothrix thermoacetophila (strain DSM 6194 / JCM 14653 / NBRC 101360 / PT) (Methanosaeta thermophila).